A 1615-amino-acid chain; its full sequence is ABC transporter A family member 4 (1615 aa).

A run of 7 helical transmembrane segments spans residues I30–I50, G233–I253, S278–A298, I308–L328, Y337–G357, L365–C385, and Y405–L425. The 202-residue stretch at T182 to V383 folds into the ABC transmembrane type-2 domain. An ABC transporter 1 domain is found at I492–S727. ATP is bound at residue G528 to S535. Transmembrane regions (helical) follow at residues I855–L875, F1022–S1042, I1075–V1095, Y1106–F1126, V1135–I1155, I1174–I1194, and L1218–I1238. The region spanning I1293–K1528 is the ABC transporter 2 domain. G1331 to S1338 is an ATP binding site.

The protein belongs to the ABC transporter superfamily. ABCA family.

The protein localises to the membrane. The chain is ABC transporter A family member 4 (abcA4) from Dictyostelium discoideum (Social amoeba).